Reading from the N-terminus, the 501-residue chain is Flagellin (501 aa).

The protein belongs to the bacterial flagellin family.

The protein localises to the secreted. The protein resides in the bacterial flagellum. Functionally, flagellin is the subunit protein which polymerizes to form the filaments of bacterial flagella. The chain is Flagellin (fliC) from Salmonella choleraesuis (strain SC-B67).